Reading from the N-terminus, the 196-residue chain is Holliday junction branch migration complex subunit RuvA (196 aa).

The segment at 1–63 (MYDYIKGTLV…DDAHLLFGFH (63 aa)) is domain I. A domain II region spans residues 64–142 (TEDEKEVFLK…ELPAETTNTT (79 aa)). Positions 143–146 (ANQT) are flexible linker. The segment at 147 to 196 (AGNQQLDEAMEALLALGYKSTELKKVKAFFEDTNETAEQYIKSALKMLMK) is domain III.

Belongs to the RuvA family. Homotetramer. Forms an RuvA(8)-RuvB(12)-Holliday junction (HJ) complex. HJ DNA is sandwiched between 2 RuvA tetramers; dsDNA enters through RuvA and exits via RuvB. An RuvB hexamer assembles on each DNA strand where it exits the tetramer. Each RuvB hexamer is contacted by two RuvA subunits (via domain III) on 2 adjacent RuvB subunits; this complex drives branch migration. In the full resolvosome a probable DNA-RuvA(4)-RuvB(12)-RuvC(2) complex forms which resolves the HJ.

Its subcellular location is the cytoplasm. Its function is as follows. The RuvA-RuvB-RuvC complex processes Holliday junction (HJ) DNA during genetic recombination and DNA repair, while the RuvA-RuvB complex plays an important role in the rescue of blocked DNA replication forks via replication fork reversal (RFR). RuvA specifically binds to HJ cruciform DNA, conferring on it an open structure. The RuvB hexamer acts as an ATP-dependent pump, pulling dsDNA into and through the RuvAB complex. HJ branch migration allows RuvC to scan DNA until it finds its consensus sequence, where it cleaves and resolves the cruciform DNA. This Streptococcus thermophilus (strain CNRZ 1066) protein is Holliday junction branch migration complex subunit RuvA.